Here is a 314-residue protein sequence, read N- to C-terminus: MNKKLKVAIIGPGNIGTDLMIKIMRHGEHLEMGAMVGIDPQSDGLARAQRMGVATTHEGVEGLTRLPVFADIDIVFDATSAGAHVRNDAFLRSLKPNIRMVDLTPAAIGPYCIPVVNGAAHDEALNVNMVTCGGQATIPMVAAVSRVAKVHYGEIIASISSKSAGPGTRANIDEFTETTSKAIEAVGGAAKGKAIIILNPAEPPLIMRDTVYCLSELVDEDEIAASVAQMAADVQKYVPGYRLKQKVQFDIIPASRPINIPGVGQRMSGLKTSVFLEVEGAAHYLPAYAGNLDIMTSAAKTTAERMAARILSAA.

Cys-132 functions as the Acyl-thioester intermediate in the catalytic mechanism. NAD(+)-binding positions include 163 to 171 (SAGPGTRAN) and Asn-291.

It belongs to the acetaldehyde dehydrogenase family.

It carries out the reaction acetaldehyde + NAD(+) + CoA = acetyl-CoA + NADH + H(+). This chain is Acetaldehyde dehydrogenase 3, found in Dechloromonas aromatica (strain RCB).